Consider the following 1358-residue polypeptide: DNA-directed RNA polymerase subunit beta (1358 aa).

Belongs to the RNA polymerase beta chain family. The RNAP catalytic core consists of 2 alpha, 1 beta, 1 beta' and 1 omega subunit. When a sigma factor is associated with the core the holoenzyme is formed, which can initiate transcription.

It catalyses the reaction RNA(n) + a ribonucleoside 5'-triphosphate = RNA(n+1) + diphosphate. In terms of biological role, DNA-dependent RNA polymerase catalyzes the transcription of DNA into RNA using the four ribonucleoside triphosphates as substrates. The protein is DNA-directed RNA polymerase subunit beta of Francisella tularensis subsp. holarctica (strain FTNF002-00 / FTA).